We begin with the raw amino-acid sequence, 207 residues long: Large ribosomal subunit protein uL4 (207 aa).

Residues Gly-47–Ile-78 form a disordered region. Residues Gly-60–Gly-71 show a composition bias toward basic residues.

Belongs to the universal ribosomal protein uL4 family. In terms of assembly, part of the 50S ribosomal subunit.

Functionally, one of the primary rRNA binding proteins, this protein initially binds near the 5'-end of the 23S rRNA. It is important during the early stages of 50S assembly. It makes multiple contacts with different domains of the 23S rRNA in the assembled 50S subunit and ribosome. Forms part of the polypeptide exit tunnel. The sequence is that of Large ribosomal subunit protein uL4 from Acholeplasma laidlawii (strain PG-8A).